The chain runs to 518 residues: Protein FAM98A (518 aa).

2 disordered regions span residues 297 to 415 and 434 to 518; these read VLMG…GHSS and GSGY…HYTS. A compositionally biased stretch (basic and acidic residues) spans 302–311; that stretch reads VPDRGGRPNE. 3 stretches are compositionally biased toward gly residues: residues 349–364, 383–396, and 405–415; these read GGRG…GGRG, WTDG…GYQD, and QPGGYHGGHSS. Over residues 447–459 the composition is skewed to basic and acidic residues; the sequence is RYQDGGHHGDRGG. A compositionally biased stretch (gly residues) spans 460–484; the sequence is GRGGRGGRGGRGGRAGQGGGWGGRG. The span at 488–504 shows a compositional bias: low complexity; it reads YHQGGQFEQHFQHGGYQ. A compositionally biased stretch (polar residues) spans 505-518; it reads YNHSGFGQGRHYTS.

The protein belongs to the FAM98 family. As to quaternary structure, interacts (via N- and C-terminus) with DDX1. Interacts (via N- and C-terminus) with C14orf166. Interacts with FAM98B. Interacts with PLEKHM1 (via N- and C-terminus). As to expression, expressed strongly in colorectal cancer cells. Expressed strongly in colorectal cancer tissues compared to wild-type colon samples (at protein level). Expressed strongly in colorectal cancer tissues compared to wild-type colon samples.

Positively stimulates PRMT1-induced protein arginine methylation. Involved in skeletal homeostasis. Positively regulates lysosome peripheral distribution and ruffled border formation in osteoclasts. The sequence is that of Protein FAM98A from Homo sapiens (Human).